The following is a 96-amino-acid chain: Conglutin delta 4 (96 aa).

The first 22 residues, 1-22, serve as a signal peptide directing secretion; the sequence is MARLTILIAFVAALVLVVHTSA. Cystine bridges form between Cys-29-Cys-78 and Cys-80-Cys-91.

Belongs to the 2S seed storage albumins family.

The protein localises to the endoplasmic reticulum. The sequence is that of Conglutin delta 4 from Lupinus angustifolius (Narrow-leaved blue lupine).